Here is a 291-residue protein sequence, read N- to C-terminus: Bifunctional protein FolD (291 aa).

NADP(+) contacts are provided by residues 168 to 170, T195, and V236; that span reads GRG.

This sequence belongs to the tetrahydrofolate dehydrogenase/cyclohydrolase family. Homodimer.

It catalyses the reaction (6R)-5,10-methylene-5,6,7,8-tetrahydrofolate + NADP(+) = (6R)-5,10-methenyltetrahydrofolate + NADPH. The catalysed reaction is (6R)-5,10-methenyltetrahydrofolate + H2O = (6R)-10-formyltetrahydrofolate + H(+). It participates in one-carbon metabolism; tetrahydrofolate interconversion. Catalyzes the oxidation of 5,10-methylenetetrahydrofolate to 5,10-methenyltetrahydrofolate and then the hydrolysis of 5,10-methenyltetrahydrofolate to 10-formyltetrahydrofolate. The sequence is that of Bifunctional protein FolD from Bifidobacterium adolescentis (strain ATCC 15703 / DSM 20083 / NCTC 11814 / E194a).